A 540-amino-acid chain; its full sequence is Beta-2-syntrophin (540 aa).

Residues 73–114 (LPNGGGAGDSLPGSPSRGLGPPSPPAPPRGPAGEAGASPPVR) form a disordered region. A compositionally biased stretch (low complexity) spans 81–92 (DSLPGSPSRGLG). Positions 93-102 (PPSPPAPPRG) are enriched in pro residues. Phosphoserine is present on residues serine 95, serine 110, serine 129, serine 211, serine 222, serine 233, serine 393, and serine 395. Positions 103–112 (PAGEAGASPP) are enriched in low complexity. Residues 115–198 (RVRVVKQEAG…EVLLEVKFIR (84 aa)) form the PDZ domain. PH domains are found at residues 163–300 (ILSV…TNIM) and 325–437 (EVKH…QGCH). Residues 220–240 (PQSPSFSGSEDSGSPKHQNST) form a disordered region. Residues 222–231 (SPSFSGSEDS) show a composition bias toward low complexity. The region spanning 484–540 (PFERLKMSADDGIRNLYLDFGGPEGELTMDLHSCPKPIVFVLHTFLSAKVTRMGLLV) is the SU domain. The interval 518-540 (PKPIVFVLHTFLSAKVTRMGLLV) is calmodulin-binding.

The protein belongs to the syntrophin family. In terms of assembly, monomer and homodimer. Interacts with the other members of the syntrophin family: SNTA1 and SNTB1; and with the sodium channel proteins SCN4A and SCN5A. Interacts with SAST, MAST205, microtubules and microtubule-associated proteins. Interacts with the dystrophin protein DMD and related proteins DTNA and UTRN, and with the neuroregulin receptor ERBB4. Interacts with PTPRN when phosphorylated, protecting PTPRN from protein cleavage by CAPN1. Dephosphorylation upon insulin stimulation disrupts the interaction with PTPRN and results in the cleavage of PTPRN. Interacts with DTNB. Post-translationally, phosphorylated. Partially dephosphorylated upon insulin stimulation. Ubiquitous. Isoform 1 is the predominant isoform. Weak level of isoform 2 is present in all tested tissues, except in liver and heart where it is highly expressed.

It is found in the membrane. The protein localises to the cytoplasmic vesicle. The protein resides in the secretory vesicle membrane. Its subcellular location is the cell junction. It localises to the cytoplasm. It is found in the cytoskeleton. Adapter protein that binds to and probably organizes the subcellular localization of a variety of membrane proteins. May link various receptors to the actin cytoskeleton and the dystrophin glycoprotein complex. May play a role in the regulation of secretory granules via its interaction with PTPRN. This Homo sapiens (Human) protein is Beta-2-syntrophin (SNTB2).